Here is a 184-residue protein sequence, read N- to C-terminus: Translation initiation factor IF-3 (184 aa).

It belongs to the IF-3 family. As to quaternary structure, monomer.

The protein localises to the cytoplasm. Functionally, IF-3 binds to the 30S ribosomal subunit and shifts the equilibrium between 70S ribosomes and their 50S and 30S subunits in favor of the free subunits, thus enhancing the availability of 30S subunits on which protein synthesis initiation begins. The polypeptide is Translation initiation factor IF-3 (Mycoplasma genitalium (strain ATCC 33530 / DSM 19775 / NCTC 10195 / G37) (Mycoplasmoides genitalium)).